The chain runs to 100 residues: NADH-quinone oxidoreductase subunit K (100 aa).

Helical transmembrane passes span 4–24 (LFHG…SLIV), 28–48 (ILFI…ALIV), and 60–80 (IMYI…LALL).

This sequence belongs to the complex I subunit 4L family. As to quaternary structure, NDH-1 is composed of 13 different subunits. Subunits NuoA, H, J, K, L, M, N constitute the membrane sector of the complex.

It localises to the cell membrane. It carries out the reaction a quinone + NADH + 5 H(+)(in) = a quinol + NAD(+) + 4 H(+)(out). Functionally, NDH-1 shuttles electrons from NADH, via FMN and iron-sulfur (Fe-S) centers, to quinones in the respiratory chain. The immediate electron acceptor for the enzyme in this species is believed to be ubiquinone. Couples the redox reaction to proton translocation (for every two electrons transferred, four hydrogen ions are translocated across the cytoplasmic membrane), and thus conserves the redox energy in a proton gradient. The protein is NADH-quinone oxidoreductase subunit K of Buchnera aphidicola subsp. Acyrthosiphon pisum (strain 5A).